A 570-amino-acid polypeptide reads, in one-letter code: Periplasmic trehalase (570 aa).

The N-terminal stretch at 1-34 (MIPPEIRRSVLLQKAIKLALAGTLLTFASFSATA) is a signal peptide. Residues Arg-159, 166-167 (WD), Asn-203, 212-214 (HSQ), 284-286 (RPE), and Gly-317 contribute to the substrate site. Residues Asp-319 and Glu-503 each act as proton donor/acceptor in the active site. Glu-518 provides a ligand contact to substrate. The disordered stretch occupies residues 544–570 (KPCDSVPSTRPASLSATPTKTPSAATQ). Residues 554–570 (PASLSATPTKTPSAATQ) show a composition bias toward low complexity.

This sequence belongs to the glycosyl hydrolase 37 family. In terms of assembly, monomer.

Its subcellular location is the periplasm. The catalysed reaction is alpha,alpha-trehalose + H2O = alpha-D-glucose + beta-D-glucose. Functionally, provides the cells with the ability to utilize trehalose at high osmolarity by splitting it into glucose molecules that can subsequently be taken up by the phosphotransferase-mediated uptake system. The protein is Periplasmic trehalase of Salmonella paratyphi C (strain RKS4594).